A 362-amino-acid polypeptide reads, in one-letter code: 1-aminocyclopropane-1-carboxylate oxidase homolog 10 (362 aa).

Residues 211-310 (KGLFMLCHYY…RISVACFFSS (100 aa)) enclose the Fe2OG dioxygenase domain. Positions 235, 237, and 291 each coordinate Fe cation. Arg-301 provides a ligand contact to 2-oxoglutarate.

It belongs to the iron/ascorbate-dependent oxidoreductase family. The cofactor is Fe(2+).

This chain is 1-aminocyclopropane-1-carboxylate oxidase homolog 10, found in Arabidopsis thaliana (Mouse-ear cress).